Here is a 510-residue protein sequence, read N- to C-terminus: Cytochrome P450 monooxygenase BOT1 (510 aa).

A helical transmembrane segment spans residues 16-36 (PLAWAALILASFTLYSVQLVV). Residue Cys-454 participates in heme binding. Asn-476 is a glycosylation site (N-linked (GlcNAc...) asparagine).

Belongs to the cytochrome P450 family. Heme is required as a cofactor.

Its subcellular location is the membrane. It participates in secondary metabolite biosynthesis. Cytochrome P450 monooxygenase; part of the gene cluster that mediates the biosynthesis of botrydial. Botrydial is necessary for colonization of plant tissue by the T4 strain. It is a strain-dependent virulence factor since highly aggressive strains like SAS56 or B05 still retain substantial virulence when botrydial synthesis is impaired, since they produce also botcinic acid. The first step of botrydial biosynthesis is performed by the sesquiterpene synthase BOT2 which catalyzes the cyclization of farnesyl diphosphate (FPP) to presilphiperfolan-8-beta-ol (PSP). The cytochrome P450 monooxygenase BOT4 then catalyzes the hydroxylation at C-4 to give a probotryane intermediate. Acetylation of the hydroxyl at C-4 is carried out by the acetyltransferase BOT5, followed by the combined action of the P450 monooxygenases BOT3 and BOT1, to yield finally the glycol, via the regio- and stereospecific hydroxylations at C-10 and C-15 of the probotryane intermediates, respectively. The cleavage of the C10-C15 bond of probotryane skeleton is an intriguing and chemically important reaction, which could be mediated by some of the monooxygenases or by a combination of them. It is possible that either BOT3 or BOT1 would oxidize either the 10- or the 15-hydroxy group to the hydroperoxide derivative, which would then undergo heterolytic fragmentation to give the dialdehyde botrydial. Finally, the dehydrogenase BOT7 might be involved in the conversion of botrydial to dihydrobotrydial. The polypeptide is Cytochrome P450 monooxygenase BOT1 (Botryotinia fuckeliana (Noble rot fungus)).